The primary structure comprises 649 residues: Protein WHI4 (649 aa).

2 positions are modified to phosphoserine: Ser22 and Ser206. Disordered stretches follow at residues 196-217 (EHVS…SSAQ) and 228-247 (ISYG…KPRP). The segment covering 228–238 (ISYGKTSSSPL) has biased composition (polar residues). Phosphoserine is present on residues Ser258 and Ser283. 2 disordered regions span residues 438 to 461 (LDLN…SIFN) and 604 to 649 (QLPH…YGKS). The 93-residue stretch at 533-625 (NTLYVGNLPP…GGIRLSFSKN (93 aa)) folds into the RRM domain. A compositionally biased stretch (polar residues) spans 631–649 (GSNSRSKSGYSFNGSYGKS).

Post-translationally, phosphorylated by PKA in vitro.

The protein resides in the cytoplasm. Has a partially redundant function to WHI3, a dosage-dependent modulator of cell size. This is Protein WHI4 (WHI4) from Saccharomyces cerevisiae (strain ATCC 204508 / S288c) (Baker's yeast).